We begin with the raw amino-acid sequence, 732 residues long: Polyribonucleotide nucleotidyltransferase (732 aa).

The Mg(2+) site is built by Asp-483 and Asp-489. The region spanning 550 to 609 (PRIVTVQIPVDKIGELIGPKGKNIRGIQDETGAELSVEDDGTVTIAAVGGDSMERAKQMV) is the KH domain. Positions 619–687 (GETYEGTVKT…ERGRLRLSMK (69 aa)) constitute an S1 motif domain. The disordered stretch occupies residues 684-732 (LSMKALLPKPEGMPDEPPQSERPRRDDGERSGGDRGGRGGRNGGGRDRR). Over residues 702 to 720 (QSERPRRDDGERSGGDRGG) the composition is skewed to basic and acidic residues.

This sequence belongs to the polyribonucleotide nucleotidyltransferase family. It depends on Mg(2+) as a cofactor.

It localises to the cytoplasm. The enzyme catalyses RNA(n+1) + phosphate = RNA(n) + a ribonucleoside 5'-diphosphate. Involved in mRNA degradation. Catalyzes the phosphorolysis of single-stranded polyribonucleotides processively in the 3'- to 5'-direction. This chain is Polyribonucleotide nucleotidyltransferase, found in Gemmatimonas aurantiaca (strain DSM 14586 / JCM 11422 / NBRC 100505 / T-27).